Reading from the N-terminus, the 190-residue chain is MIFRCCFEGCGKSFPRRAKLSDHLNTHTRSRPYKCDMCEKSYMKNGHLSVHKKKHFPPELACERCGYMCHTRDRLHKHQKACLEYKCGICGKRYRKRSWFDVHVESHHVKVFNAPRSKHVCEYCKFEFNKKSNLSTHVRSVHLLMKPFKCPCGKEYAHNASLDRHRKKCASWSYPGLDVAKPPAASNSLL.

C2H2-type zinc fingers lie at residues 4–27, 33–55, 85–108, and 119–142; these read RCCFEGCGKSFPRRAKLSDHLNTH, YKCDMCEKSYMKNGHLSVHKKKH, YKCGICGKRYRKRSWFDVHVESHH, and HVCEYCKFEFNKKSNLSTHVRSVH.

The polypeptide is Zinc finger C2H2 protein ECU03_0790 (Encephalitozoon cuniculi (strain GB-M1) (Microsporidian parasite)).